The sequence spans 85 residues: Small ribosomal subunit protein uS17 (85 aa).

It belongs to the universal ribosomal protein uS17 family. In terms of assembly, part of the 30S ribosomal subunit.

One of the primary rRNA binding proteins, it binds specifically to the 5'-end of 16S ribosomal RNA. This is Small ribosomal subunit protein uS17 from Aggregatibacter actinomycetemcomitans (Actinobacillus actinomycetemcomitans).